Reading from the N-terminus, the 288-residue chain is Polyamine aminopropyltransferase (288 aa).

Residues 9 to 238 (ETLHDQFGQY…GIMTFAWATD (230 aa)) form the PABS domain. Q33 is an S-methyl-5'-thioadenosine binding site. H64 and D88 together coordinate spermidine. S-methyl-5'-thioadenosine contacts are provided by residues E108 and 140-141 (DG). Residue D158 is the Proton acceptor of the active site. A spermidine-binding site is contributed by 158–161 (DCTD). S-methyl-5'-thioadenosine is bound at residue P165.

The protein belongs to the spermidine/spermine synthase family. As to quaternary structure, homodimer or homotetramer.

It is found in the cytoplasm. The enzyme catalyses S-adenosyl 3-(methylsulfanyl)propylamine + putrescine = S-methyl-5'-thioadenosine + spermidine + H(+). Its pathway is amine and polyamine biosynthesis; spermidine biosynthesis; spermidine from putrescine: step 1/1. Its function is as follows. Catalyzes the irreversible transfer of a propylamine group from the amino donor S-adenosylmethioninamine (decarboxy-AdoMet) to putrescine (1,4-diaminobutane) to yield spermidine. The protein is Polyamine aminopropyltransferase of Escherichia coli (strain ATCC 8739 / DSM 1576 / NBRC 3972 / NCIMB 8545 / WDCM 00012 / Crooks).